A 290-amino-acid chain; its full sequence is 3-hydroxyacyl-thioester dehydratase Y (290 aa).

Residues 147–169 (FGGARGERPAAPEFPDRHPDARI) form a disordered region. Positions 151–169 (RGERPAAPEFPDRHPDARI) are enriched in basic and acidic residues. Residues 161–271 (PDRHPDARID…AVFRTEVAGS (111 aa)) enclose the MaoC-like domain.

Belongs to the enoyl-CoA hydratase/isomerase family.

The catalysed reaction is a (3R)-3-hydroxyacyl-CoA = a (2E)-enoyl-CoA + H2O. It carries out the reaction (3R)-hydroxyhexanoyl-CoA = (2E)-hexenoyl-CoA + H2O. The enzyme catalyses (2E)-octenoyl-CoA + H2O = (3R)-hydroxyoctanoyl-CoA. It catalyses the reaction (3R)-3-hydroxydecanoyl-CoA = (2E)-decenoyl-CoA + H2O. The catalysed reaction is (3R)-3-hydroxydodecanoyl-CoA = (2E)-dodecenoyl-CoA + H2O. It carries out the reaction (3R)-hydroxyhexadecanoyl-CoA = (2E)-hexadecenoyl-CoA + H2O. Functionally, shows trans-enoyl-CoA hydratase/3-hydroxyacyl-CoA dehydratase activity. In vitro, can hydrate various enoyl-CoA such as (2E)-hexenoyl-CoA, (2E)-octenoyl-CoA, (2E)-decenoyl-CoA, (2E)-dodecenoyl-CoA and (2E)-hexadecenoyl-CoA. May contribute to the persistence of the tuberculosis infection by inducing COX-2 expression in macrophages through MAPK-NF-kappaB signaling pathway. The sequence is that of 3-hydroxyacyl-thioester dehydratase Y from Mycobacterium tuberculosis (strain ATCC 25618 / H37Rv).